The following is a 338-amino-acid chain: 4-hydroxy-3-methylbut-2-enyl diphosphate reductase (338 aa).

Cys-21 is a [4Fe-4S] cluster binding site. (2E)-4-hydroxy-3-methylbut-2-enyl diphosphate is bound by residues His-50 and His-83. The dimethylallyl diphosphate site is built by His-50 and His-83. Positions 50 and 83 each coordinate isopentenyl diphosphate. Cys-105 contributes to the [4Fe-4S] cluster binding site. A (2E)-4-hydroxy-3-methylbut-2-enyl diphosphate-binding site is contributed by His-133. Position 133 (His-133) interacts with dimethylallyl diphosphate. His-133 serves as a coordination point for isopentenyl diphosphate. The Proton donor role is filled by Glu-135. Thr-173 contributes to the (2E)-4-hydroxy-3-methylbut-2-enyl diphosphate binding site. Residue Cys-203 coordinates [4Fe-4S] cluster. Residues Ser-231, Ser-232, Asn-233, and Ser-276 each coordinate (2E)-4-hydroxy-3-methylbut-2-enyl diphosphate. 4 residues coordinate dimethylallyl diphosphate: Ser-231, Ser-232, Asn-233, and Ser-276. Residues Ser-231, Ser-232, Asn-233, and Ser-276 each contribute to the isopentenyl diphosphate site.

It belongs to the IspH family. It depends on [4Fe-4S] cluster as a cofactor.

The catalysed reaction is isopentenyl diphosphate + 2 oxidized [2Fe-2S]-[ferredoxin] + H2O = (2E)-4-hydroxy-3-methylbut-2-enyl diphosphate + 2 reduced [2Fe-2S]-[ferredoxin] + 2 H(+). The enzyme catalyses dimethylallyl diphosphate + 2 oxidized [2Fe-2S]-[ferredoxin] + H2O = (2E)-4-hydroxy-3-methylbut-2-enyl diphosphate + 2 reduced [2Fe-2S]-[ferredoxin] + 2 H(+). It participates in isoprenoid biosynthesis; dimethylallyl diphosphate biosynthesis; dimethylallyl diphosphate from (2E)-4-hydroxy-3-methylbutenyl diphosphate: step 1/1. Its pathway is isoprenoid biosynthesis; isopentenyl diphosphate biosynthesis via DXP pathway; isopentenyl diphosphate from 1-deoxy-D-xylulose 5-phosphate: step 6/6. Catalyzes the conversion of 1-hydroxy-2-methyl-2-(E)-butenyl 4-diphosphate (HMBPP) into a mixture of isopentenyl diphosphate (IPP) and dimethylallyl diphosphate (DMAPP). Acts in the terminal step of the DOXP/MEP pathway for isoprenoid precursor biosynthesis. In Streptomyces coelicolor (strain ATCC BAA-471 / A3(2) / M145), this protein is 4-hydroxy-3-methylbut-2-enyl diphosphate reductase.